A 323-amino-acid polypeptide reads, in one-letter code: Acetylglutamate kinase (323 aa).

Residues 90 to 91, arginine 112, and asparagine 218 contribute to the substrate site; that span reads GG.

The protein belongs to the acetylglutamate kinase family. ArgB subfamily.

It localises to the cytoplasm. The enzyme catalyses N-acetyl-L-glutamate + ATP = N-acetyl-L-glutamyl 5-phosphate + ADP. It functions in the pathway amino-acid biosynthesis; L-arginine biosynthesis; N(2)-acetyl-L-ornithine from L-glutamate: step 2/4. Functionally, catalyzes the ATP-dependent phosphorylation of N-acetyl-L-glutamate. This chain is Acetylglutamate kinase, found in Ehrlichia canis (strain Jake).